Reading from the N-terminus, the 84-residue chain is TLLLTLVVVTIVCLDLGYTLTCVTDKSFGGVITEECAAGQKICFKNWKKMGPKLYDVKRGCTATCPKADDNGCVKCCNTDKCNK.

An N-terminal signal peptide occupies residues Thr-1–Thr-19. Disulfide bonds link Cys-22–Cys-43, Cys-36–Cys-61, Cys-65–Cys-76, and Cys-77–Cys-82.

It belongs to the three-finger toxin family. Short-chain subfamily. Aminergic toxin sub-subfamily. In terms of assembly, homodimer; disulfide-linked. As to expression, expressed by the venom gland.

The protein localises to the secreted. Functionally, this protein shows a synergetic toxic effect in that it enhances the toxicity of other toxins. The chain is Venom protein SynTx from Dendroaspis jamesoni jamesoni (Jameson's mamba).